A 427-amino-acid chain; its full sequence is Enolase (427 aa).

Residue Gln163 participates in (2R)-2-phosphoglycerate binding. Glu205 (proton donor) is an active-site residue. Mg(2+)-binding residues include Asp242, Glu285, and Asp312. Positions 337, 366, 367, and 388 each coordinate (2R)-2-phosphoglycerate. Lys337 acts as the Proton acceptor in catalysis.

The protein belongs to the enolase family. The cofactor is Mg(2+).

The protein resides in the cytoplasm. The protein localises to the secreted. Its subcellular location is the cell surface. The enzyme catalyses (2R)-2-phosphoglycerate = phosphoenolpyruvate + H2O. It functions in the pathway carbohydrate degradation; glycolysis; pyruvate from D-glyceraldehyde 3-phosphate: step 4/5. Its function is as follows. Catalyzes the reversible conversion of 2-phosphoglycerate (2-PG) into phosphoenolpyruvate (PEP). It is essential for the degradation of carbohydrates via glycolysis. In Burkholderia lata (strain ATCC 17760 / DSM 23089 / LMG 22485 / NCIMB 9086 / R18194 / 383), this protein is Enolase.